We begin with the raw amino-acid sequence, 395 residues long: MVNTEVYIVSAVRTPMGSFGGSFASLPATKLGSIAIKGALERVNIKPSDVDEVFMGNVVSANLGQNPARQCALGAGLPRSIVCTTVNKVCASGMKATILGAQTIMTGNAEIVVAGGTESMSNAPYYAPKNRFGAKYGNVELVDGLLRDGLSDAYDGLPMGNAAELCAEEHSIDRASQDAFAISSYKRAQNAQATKAFEQEIVPVEVPVGRGKPNKLVTEDEEPKNLNEDKLKSVRAVFKSNGTVTAANASTLNDGASALVLMSAAKVKELGLKPLAKIIGWGEAAQDPERFTTSPSLAIPKALKHAGIEASQVDYYEINEAFSVVAVANTKILGLDPERVNINGGGVAMGHPLGSSGSRIICTLAYILAQKDAKIGVAAVCNGGGGASSIVIERV.

C90 acts as the Acyl-thioester intermediate in catalysis. Residues Y185 and K230 each coordinate CoA. Y185 contacts K(+). Residues A246, A247, and A249 each contribute to the K(+) site. S250 provides a ligand contact to CoA. V347 serves as a coordination point for K(+). Catalysis depends on proton acceptor residues H351 and C381.

It belongs to the thiolase-like superfamily. Thiolase family. As to quaternary structure, homotetramer.

The protein resides in the cytoplasm. The catalysed reaction is 2 acetyl-CoA = acetoacetyl-CoA + CoA. It participates in metabolic intermediate biosynthesis; (R)-mevalonate biosynthesis; (R)-mevalonate from acetyl-CoA: step 1/3. In terms of biological role, acetyl-CoA acetyltransferase; part of the first module of ergosterol biosynthesis pathway that includes the early steps of the pathway, conserved across all eukaryotes, and which results in the formation of mevalonate from acetyl-coenzyme A (acetyl-CoA). Erg10 catalyzes the formation of acetoacetyl-CoA from acetyl-CoA. The first module starts with the action of the cytosolic acetyl-CoA acetyltransferase eg10 that catalyzes the formation of acetoacetyl-CoA. The hydroxymethylglutaryl-CoA synthases erg13 then condenses acetyl-CoA with acetoacetyl-CoA to form HMG-CoA. The rate-limiting step of the early module is the reduction to mevalonate by the 3-hydroxy-3-methylglutaryl-coenzyme A (HMG-CoA) reductases hcs1. This is Acetyl-CoA acetyltransferase (erg10) from Schizosaccharomyces pombe (strain 972 / ATCC 24843) (Fission yeast).